The sequence spans 199 residues: Peroxiredoxin-1 (199 aa).

Ser2 is subject to N-acetylserine. The region spanning 6–165 (AKIGHPAPNF…TLRLVQAFQF (160 aa)) is the Thioredoxin domain. Lys7 bears the N6-acetyllysine; alternate mark. Lys7 is covalently cross-linked (Glycyl lysine isopeptide (Lys-Gly) (interchain with G-Cter in SUMO2); alternate). N6-acetyllysine occurs at positions 16 and 27. Position 32 is a phosphoserine (Ser32). The residue at position 35 (Lys35) is an N6-acetyllysine; alternate. Lys35 is modified (N6-succinyllysine; alternate). Catalysis depends on Cys52, which acts as the Cysteine sulfenic acid (-SOH) intermediate. Phosphothreonine is present on Thr90. Lys120 participates in a covalent cross-link: Glycyl lysine isopeptide (Lys-Gly) (interchain with G-Cter in SUMO2). Lys136 is modified (N6-acetyllysine). The segment at 176–199 (GWKPGSDTIKPDVQKSKEYFSKQK) is disordered. The span at 184–199 (IKPDVQKSKEYFSKQK) shows a compositional bias: basic and acidic residues. Residue Lys185 forms a Glycyl lysine isopeptide (Lys-Gly) (interchain with G-Cter in SUMO1) linkage. N6-acetyllysine is present on Lys197.

It belongs to the peroxiredoxin family. AhpC/Prx1 subfamily. As to quaternary structure, homodimer; disulfide-linked, upon oxidation. 5 homodimers assemble to form a ring-like decamer. Interacts with GDPD5; forms a mixed-disulfide with GDPD5. Interacts with SESN1 and SESN2. Interacts with FAM107A. In terms of processing, phosphorylated on Thr-90 during the M-phase, which leads to a decrease in enzymatic activity. Post-translationally, acetylation increases reducing activity and resistance to superoxidation. Deacetylated by HDAC6 which decreases reducing activity. Detected in heart and skeletal muscle (at protein level).

It is found in the cytoplasm. The catalysed reaction is a hydroperoxide + [thioredoxin]-dithiol = an alcohol + [thioredoxin]-disulfide + H2O. Thiol-specific peroxidase that catalyzes the reduction of hydrogen peroxide and organic hydroperoxides to water and alcohols, respectively. Plays a role in cell protection against oxidative stress by detoxifying peroxides and as sensor of hydrogen peroxide-mediated signaling events. Might participate in the signaling cascades of growth factors and tumor necrosis factor-alpha by regulating the intracellular concentrations of H(2)O(2). Reduces an intramolecular disulfide bond in GDPD5 that gates the ability to GDPD5 to drive postmitotic motor neuron differentiation. The chain is Peroxiredoxin-1 (PRDX1) from Myotis lucifugus (Little brown bat).